We begin with the raw amino-acid sequence, 443 residues long: Ribosomal protein uS12 methylthiotransferase RimO (443 aa).

Residues Pro-10 to Pro-120 enclose the MTTase N-terminal domain. Positions 19, 55, 84, 151, 155, and 158 each coordinate [4Fe-4S] cluster. Residues Leu-137–Arg-375 enclose the Radical SAM core domain. Positions Glu-377–Val-443 constitute a TRAM domain.

The protein belongs to the methylthiotransferase family. RimO subfamily. [4Fe-4S] cluster is required as a cofactor.

The protein localises to the cytoplasm. The catalysed reaction is L-aspartate(89)-[ribosomal protein uS12]-hydrogen + (sulfur carrier)-SH + AH2 + 2 S-adenosyl-L-methionine = 3-methylsulfanyl-L-aspartate(89)-[ribosomal protein uS12]-hydrogen + (sulfur carrier)-H + 5'-deoxyadenosine + L-methionine + A + S-adenosyl-L-homocysteine + 2 H(+). Its function is as follows. Catalyzes the methylthiolation of an aspartic acid residue of ribosomal protein uS12. The chain is Ribosomal protein uS12 methylthiotransferase RimO from Azoarcus sp. (strain BH72).